Here is a 1023-residue protein sequence, read N- to C-terminus: Probable beta-glucosidase E (1023 aa).

The segment at Met-1–Leu-51 is disordered. The Cytoplasmic segment spans residues Met-1 to Arg-128. The segment covering Ser-11 to Glu-45 has biased composition (basic and acidic residues). A helical; Signal-anchor for type II membrane protein membrane pass occupies residues Thr-129–Ser-149. The Extracellular portion of the chain corresponds to Thr-150–Pro-1023. N-linked (GlcNAc...) asparagine glycosylation is found at Asn-199 and Asn-387. Asp-415 is an active-site residue. N-linked (GlcNAc...) asparagine glycans are attached at residues Asn-458 and Asn-497. Disordered regions lie at residues Trp-485–Gly-515 and Asn-822–Asp-841. Positions Pro-827–Pro-838 are enriched in low complexity. Asn-848 is a glycosylation site (N-linked (GlcNAc...) asparagine). The interval Ala-873–Ser-909 is disordered. N-linked (GlcNAc...) asparagine glycosylation is found at Asn-964 and Asn-979.

It belongs to the glycosyl hydrolase 3 family.

Its subcellular location is the cell membrane. The enzyme catalyses Hydrolysis of terminal, non-reducing beta-D-glucosyl residues with release of beta-D-glucose.. It functions in the pathway glycan metabolism; cellulose degradation. Functionally, beta-glucosidases are one of a number of cellulolytic enzymes involved in the degradation of cellulosic biomass. Catalyzes the last step releasing glucose from the inhibitory cellobiose. The sequence is that of Probable beta-glucosidase E (bglE) from Emericella nidulans (strain FGSC A4 / ATCC 38163 / CBS 112.46 / NRRL 194 / M139) (Aspergillus nidulans).